A 165-amino-acid polypeptide reads, in one-letter code: Nucleotide-binding protein SYNW1816 (165 aa).

Belongs to the YajQ family.

Functionally, nucleotide-binding protein. The polypeptide is Nucleotide-binding protein SYNW1816 (Parasynechococcus marenigrum (strain WH8102)).